The sequence spans 594 residues: 4-alpha-glucanotransferase DPE1, chloroplastic/amyloplastic (594 aa).

Residues 1 to 37 (MATLSLPLPHLTQAIPARARPRPRPLRGIPARLLSCR) constitute a chloroplast transit peptide.

It belongs to the disproportionating enzyme family.

The protein resides in the plastid. It is found in the chloroplast. It localises to the amyloplast. The catalysed reaction is Transfers a segment of a (1-&gt;4)-alpha-D-glucan to a new position in an acceptor, which may be glucose or a (1-&gt;4)-alpha-D-glucan.. In terms of biological role, chloroplastic alpha-glucanotransferase involved in maltotriose metabolism. The sequence is that of 4-alpha-glucanotransferase DPE1, chloroplastic/amyloplastic (DPE1) from Oryza sativa subsp. japonica (Rice).